A 277-amino-acid chain; its full sequence is MKQLYGVIGNPIGHSLSPVMHNDAFEHLNMDAHYHAFLVKEEVLGEAVRGLKALGISGFNVTTPHKVAIMDYLDEIDPLAKQIGAVNTVVHKDGKLIGYNTDGIGFVRALQSISSKPLQEKRILLLGAGGASRAIYFSLADVGVKEIDVANRTVDKAKELITACKATVHSVALSLEKATEEQGNYDIIIQTTTIGMHPRVEHTPLQISSLNKGTIVSDIIYNPFETKILCEAKEQGAMIQNGIDMFVYQGALAFEMWTGRTPNIERMKQLVIRKLGG.

Shikimate is bound by residues 15–17 (SLS) and Thr62. The active-site Proton acceptor is the Lys66. Asn87 and Asp102 together coordinate shikimate. NADP(+)-binding positions include 127–131 (GAGGA), 151–156 (NRTVDK), and Ile219. Tyr221 is a binding site for shikimate. Gly242 is an NADP(+) binding site.

The protein belongs to the shikimate dehydrogenase family. As to quaternary structure, homodimer.

The enzyme catalyses shikimate + NADP(+) = 3-dehydroshikimate + NADPH + H(+). Its pathway is metabolic intermediate biosynthesis; chorismate biosynthesis; chorismate from D-erythrose 4-phosphate and phosphoenolpyruvate: step 4/7. Involved in the biosynthesis of the chorismate, which leads to the biosynthesis of aromatic amino acids. Catalyzes the reversible NADPH linked reduction of 3-dehydroshikimate (DHSA) to yield shikimate (SA). This Bacillus cereus (strain ATCC 10987 / NRS 248) protein is Shikimate dehydrogenase (NADP(+)).